We begin with the raw amino-acid sequence, 531 residues long: Serine protease gd (531 aa).

An N-terminal signal peptide occupies residues 1 to 19 (MRLHLAAILILCIEHVTKA). The tract at residues 155-174 (PEEEEVRKTDDKPPSTPHIQ) is disordered. The Peptidase S1 domain maps to 246-531 (IESDSADSLP…FLDWITAFVI (286 aa)). N-linked (GlcNAc...) asparagine glycosylation is present at N272. Cysteines 280 and 296 form a disulfide. Catalysis depends on charge relay system residues H295 and D350. N397 and N445 each carry an N-linked (GlcNAc...) asparagine glycan. An intrachain disulfide couples C432 to C449. Residue S471 is the Charge relay system of the active site.

This sequence belongs to the peptidase S1 family. Post-translationally, proteolytically activated by the protease ndl. In terms of tissue distribution, expression begins in previtellogenic stages and is seen in germline-derived nurse cells of the germarium. Expression continues throughout oogenesis with transcripts from the nurse cells accumulating in the oocytes. Most abundant in the ovaries, the level of protein decreases from the moment of egg laying and is essentially gone by 4 hours.

The protein localises to the secreted. Component of the extracellular signaling pathway that establishes the dorsal-ventral pathway of the embryo. A protease cascade involving ndl, gd, snk and ea results in activation of the spz Toll receptor ligand; acts downstream of ndl but upstream of snk and ea. Activation of ea requires activation of the ndl-gd-snk protease cascade and sulfation of a vitelline membrane component by pip. Localized activation of the Toll receptor in the ventral region of the embryo defines cell identities along the dorsal-ventral continuum. The sequence is that of Serine protease gd from Drosophila melanogaster (Fruit fly).